A 220-amino-acid polypeptide reads, in one-letter code: Adenylate kinase (220 aa).

13 to 18 (GAGKGT) provides a ligand contact to ATP. The NMP stretch occupies residues 33–62 (ATGDMLRSQVARQTELGKEAKKIMDQGGLV). AMP-binding positions include threonine 34, arginine 39, 60 to 62 (GLV), 89 to 92 (GFPR), and glutamine 96. An LID region spans residues 130 to 167 (GRLVHPGSGRSYHLEFNPPKVPMKDDVTGEPLIQRSDD). Residues arginine 131 and 140–141 (SY) contribute to the ATP site. Residues arginine 164 and arginine 175 each contribute to the AMP site. Glutamine 203 lines the ATP pocket.

Belongs to the adenylate kinase family. AK2 subfamily. In terms of assembly, monomer.

It localises to the cytoplasm. The protein localises to the cytosol. It is found in the mitochondrion intermembrane space. Its subcellular location is the nucleus. The catalysed reaction is AMP + ATP = 2 ADP. Its function is as follows. Catalyzes the reversible transfer of the terminal phosphate group between ATP and AMP. Plays an important role in cellular energy homeostasis and in adenine nucleotide metabolism. Adenylate kinase activity is critical for regulation of the phosphate utilization and the AMP de novo biosynthesis pathways. The chain is Adenylate kinase (adk1) from Schizosaccharomyces pombe (strain 972 / ATCC 24843) (Fission yeast).